Reading from the N-terminus, the 455-residue chain is Bifunctional protein GlmU (455 aa).

Positions Met1 to Pro232 are pyrophosphorylase. UDP-N-acetyl-alpha-D-glucosamine contacts are provided by residues Leu10–Gly13, Lys24, Gln75, and Gly80–Thr81. Asp106 provides a ligand contact to Mg(2+). Residues Gly141, Glu155, Asn172, and Asn230 each contribute to the UDP-N-acetyl-alpha-D-glucosamine site. Mg(2+) is bound at residue Asn230. Positions Ala233 to Gly253 are linker. Residues Gly254 to Ala455 are N-acetyltransferase. Residues Arg336 and Lys354 each coordinate UDP-N-acetyl-alpha-D-glucosamine. His366 serves as the catalytic Proton acceptor. UDP-N-acetyl-alpha-D-glucosamine-binding residues include Tyr369 and Asn380. Residues Ala383, Asn389–Tyr390, Ser408, Ala426, and Arg443 each bind acetyl-CoA.

In the N-terminal section; belongs to the N-acetylglucosamine-1-phosphate uridyltransferase family. The protein in the C-terminal section; belongs to the transferase hexapeptide repeat family. In terms of assembly, homotrimer. The cofactor is Mg(2+).

It localises to the cytoplasm. The enzyme catalyses alpha-D-glucosamine 1-phosphate + acetyl-CoA = N-acetyl-alpha-D-glucosamine 1-phosphate + CoA + H(+). It carries out the reaction N-acetyl-alpha-D-glucosamine 1-phosphate + UTP + H(+) = UDP-N-acetyl-alpha-D-glucosamine + diphosphate. It participates in nucleotide-sugar biosynthesis; UDP-N-acetyl-alpha-D-glucosamine biosynthesis; N-acetyl-alpha-D-glucosamine 1-phosphate from alpha-D-glucosamine 6-phosphate (route II): step 2/2. Its pathway is nucleotide-sugar biosynthesis; UDP-N-acetyl-alpha-D-glucosamine biosynthesis; UDP-N-acetyl-alpha-D-glucosamine from N-acetyl-alpha-D-glucosamine 1-phosphate: step 1/1. The protein operates within bacterial outer membrane biogenesis; LPS lipid A biosynthesis. Functionally, catalyzes the last two sequential reactions in the de novo biosynthetic pathway for UDP-N-acetylglucosamine (UDP-GlcNAc). The C-terminal domain catalyzes the transfer of acetyl group from acetyl coenzyme A to glucosamine-1-phosphate (GlcN-1-P) to produce N-acetylglucosamine-1-phosphate (GlcNAc-1-P), which is converted into UDP-GlcNAc by the transfer of uridine 5-monophosphate (from uridine 5-triphosphate), a reaction catalyzed by the N-terminal domain. The protein is Bifunctional protein GlmU of Nitratidesulfovibrio vulgaris (strain ATCC 29579 / DSM 644 / CCUG 34227 / NCIMB 8303 / VKM B-1760 / Hildenborough) (Desulfovibrio vulgaris).